The following is a 206-amino-acid chain: Halorhodopsin (206 aa).

The chain crosses the membrane as a helical span at residues 1 to 15 (IALAGLSILLFVYMG). At 16 to 21 (RNVEDP) the chain is on the cytoplasmic side. Residues 22–45 (RAQLIFVATLMVPLVSISSYTGLV) form a helical membrane-spanning segment. Residues 46–75 (SGLTVGFLEMPAGHALAGMGAGPEGGVFTP) lie on the Extracellular side of the membrane. The helical transmembrane segment at 76 to 97 (WGRYLTWAFSTPMILIALGLLA) threads the bilayer. Topologically, residues 98 to 100 (GSN) are cytoplasmic. Residues 101-124 (MSKLFTAVVADVGMCITGLAAALT) traverse the membrane as a helical segment. Over 125-127 (TSS) the chain is Extracellular. Residues 128–150 (YLLRWVWYGISCAFFVVVLYILL) form a helical membrane-spanning segment. Topologically, residues 151–162 (AEWAKDAEVAGT) are cytoplasmic. A helical membrane pass occupies residues 163–186 (ADIFNTLKVLTVVLWLGYPIFWAL). The Extracellular segment spans residues 187-195 (GAEGLAVLD). The helical transmembrane segment at 196–206 (IAITSWAYSGM) threads the bilayer.

This sequence belongs to the archaeal/bacterial/fungal opsin family.

It localises to the cell membrane. Functionally, light-driven chloride pump. The chain is Halorhodopsin (hop) from Halobacterium halobium (strain mex).